Here is a 239-residue protein sequence, read N- to C-terminus: Orotidine 5'-phosphate decarboxylase (239 aa).

Substrate contacts are provided by residues Asp11, Lys33, 60-69 (DLKLHDIPTT), Thr123, Arg185, Gln194, Gly214, and Arg215. Catalysis depends on Lys62, which acts as the Proton donor.

This sequence belongs to the OMP decarboxylase family. Type 1 subfamily. In terms of assembly, homodimer.

The enzyme catalyses orotidine 5'-phosphate + H(+) = UMP + CO2. The protein operates within pyrimidine metabolism; UMP biosynthesis via de novo pathway; UMP from orotate: step 2/2. Its function is as follows. Catalyzes the decarboxylation of orotidine 5'-monophosphate (OMP) to uridine 5'-monophosphate (UMP). This chain is Orotidine 5'-phosphate decarboxylase (pyrF), found in Bacillus subtilis (strain 168).